The following is a 140-amino-acid chain: Profilin (140 aa).

Ser2 is modified (N-acetylserine).

The protein belongs to the profilin family. Occurs in many kinds of cells as a complex with monomeric actin in a 1:1 ratio.

Its subcellular location is the cytoplasm. It is found in the cytoskeleton. Binds to actin and affects the structure of the cytoskeleton. At high concentrations, profilin prevents the polymerization of actin, whereas it enhances it at low concentrations. By binding to PIP2, it inhibits the formation of IP3 and DG. The polypeptide is Profilin (Heliocidaris crassispina (Sea urchin)).